We begin with the raw amino-acid sequence, 206 residues long: uncharacterized protein (206 aa).

Positions M1–A17 are cleaved as a signal peptide. C18 is lipidated: N-palmitoyl cysteine. Residue C18 is the site of S-diacylglycerol cysteine attachment. A coiled-coil region spans residues A21–K58. The 105-residue stretch at G97–E201 folds into the Cytochrome c domain. Residues C127, C130, and H131 each contribute to the heme c site.

The protein localises to the cell membrane. This is an uncharacterized protein from Aquifex aeolicus (strain VF5).